Reading from the N-terminus, the 437-residue chain is Trigger factor (437 aa).

One can recognise a PPIase FKBP-type domain in the interval 164 to 249 (GDRVTIDFAG…LKSVEAPKLP (86 aa)).

This sequence belongs to the FKBP-type PPIase family. Tig subfamily.

It is found in the cytoplasm. It carries out the reaction [protein]-peptidylproline (omega=180) = [protein]-peptidylproline (omega=0). Functionally, involved in protein export. Acts as a chaperone by maintaining the newly synthesized protein in an open conformation. Functions as a peptidyl-prolyl cis-trans isomerase. The sequence is that of Trigger factor from Azoarcus sp. (strain BH72).